A 423-amino-acid polypeptide reads, in one-letter code: 3-phosphoshikimate 1-carboxyvinyltransferase (423 aa).

3-phosphoshikimate-binding residues include Lys21, Ser22, and Arg26. Residue Lys21 coordinates phosphoenolpyruvate. Phosphoenolpyruvate is bound by residues Gly93 and Arg123. 6 residues coordinate 3-phosphoshikimate: Ser168, Ser169, Gln170, Ser196, Asp311, and Lys338. Gln170 serves as a coordination point for phosphoenolpyruvate. The Proton acceptor role is filled by Asp311. 3 residues coordinate phosphoenolpyruvate: Arg342, Arg383, and Lys408.

It belongs to the EPSP synthase family. Monomer.

The protein localises to the cytoplasm. The catalysed reaction is 3-phosphoshikimate + phosphoenolpyruvate = 5-O-(1-carboxyvinyl)-3-phosphoshikimate + phosphate. It participates in metabolic intermediate biosynthesis; chorismate biosynthesis. Catalyzes the transfer of the enolpyruvyl moiety of phosphoenolpyruvate (PEP) to the 5-hydroxyl of shikimate-3-phosphate (S3P) to produce enolpyruvyl shikimate-3-phosphate and inorganic phosphate. This Methanosphaerula palustris (strain ATCC BAA-1556 / DSM 19958 / E1-9c) protein is 3-phosphoshikimate 1-carboxyvinyltransferase.